We begin with the raw amino-acid sequence, 545 residues long: Protein FAR1-RELATED SEQUENCE 9 (545 aa).

The 44-residue stretch at 22–65 (LNYLKRRQLENPGFLYAIEDDCGNVFWADPTCRLNYTYFGDTLV) folds into the FAR1 domain. Residues 66–150 (FDTTYRRGKR…RVFSQTRLRF (85 aa)) form the MULE domain. Residues 345–381 (HTVSFDSLEVKANCSCQMFEYSGIICRHILAVFSAKN) form an SWIM-type zinc finger. Positions 460-495 (SNRTPGTRLPNGEAYPSEEARETANATNHPGGEKER) are disordered. A coiled-coil region spans residues 492–545 (EKERTILELTAELERTGQRCEVYRANLLSILRDMEEQKFQLSLKVQNARLSLKE).

Belongs to the FHY3/FAR1 family. Expressed in hypocotyls, rosette and cauline leaves, inflorescences stems, flowers and siliques.

Its subcellular location is the nucleus. Its function is as follows. Putative transcription activator involved in regulating light control of development. May act as a negative regulator specific to phyB signaling. This Arabidopsis thaliana (Mouse-ear cress) protein is Protein FAR1-RELATED SEQUENCE 9 (FRS9).